The chain runs to 349 residues: NADP-dependent alcohol dehydrogenase C 1 (349 aa).

The Zn(2+) site is built by Cys-41, His-63, Cys-94, Cys-97, Cys-100, Cys-108, and Cys-159. Residue Lys-210 forms an Isoglutamyl lysine isopeptide (Lys-Gln) (interchain with Q-Cter in protein Pup) linkage.

It belongs to the zinc-containing alcohol dehydrogenase family. The cofactor is Zn(2+).

It carries out the reaction a primary alcohol + NADP(+) = an aldehyde + NADPH + H(+). Its function is as follows. Prefers aldehydes over alcohols. This is NADP-dependent alcohol dehydrogenase C 1 (adhc1) from Mycolicibacterium smegmatis (strain ATCC 700084 / mc(2)155) (Mycobacterium smegmatis).